Reading from the N-terminus, the 253-residue chain is 5'/3'-nucleotidase SurE (253 aa).

Residues Asp-8, Asp-9, Ser-39, and Asn-92 each contribute to the a divalent metal cation site.

The protein belongs to the SurE nucleotidase family. A divalent metal cation serves as cofactor.

It is found in the cytoplasm. The catalysed reaction is a ribonucleoside 5'-phosphate + H2O = a ribonucleoside + phosphate. It catalyses the reaction a ribonucleoside 3'-phosphate + H2O = a ribonucleoside + phosphate. The enzyme catalyses [phosphate](n) + H2O = [phosphate](n-1) + phosphate + H(+). Nucleotidase with a broad substrate specificity as it can dephosphorylate various ribo- and deoxyribonucleoside 5'-monophosphates and ribonucleoside 3'-monophosphates with highest affinity to 3'-AMP. Also hydrolyzes polyphosphate (exopolyphosphatase activity) with the preference for short-chain-length substrates (P20-25). Might be involved in the regulation of dNTP and NTP pools, and in the turnover of 3'-mononucleotides produced by numerous intracellular RNases (T1, T2, and F) during the degradation of various RNAs. The sequence is that of 5'/3'-nucleotidase SurE from Erwinia tasmaniensis (strain DSM 17950 / CFBP 7177 / CIP 109463 / NCPPB 4357 / Et1/99).